A 376-amino-acid chain; its full sequence is WW domain-binding protein 4 (376 aa).

The Matrin-type zinc-finger motif lies at Lys11–Lys42. Residues Ile94–Ser107 show a composition bias toward low complexity. Disordered stretches follow at residues Ile94–Trp128, Ser189–Val335, and Phe356–Gln376. 2 WW domains span residues Asp122–Gly155 and Thr163–Asp196. Over residues Ser189–Ile198 the composition is skewed to basic and acidic residues. Polar residues predominate over residues Asp203 to Gly215. 2 stretches are compositionally biased toward basic and acidic residues: residues Asp218–Ser229 and Glu243–Asn257. Phosphoserine is present on residues Ser220, Ser227, and Ser229. Position 262 is a phosphoserine (Ser262). Residues Gln298 to Glu309 are compositionally biased toward basic and acidic residues. Residues Ser316–Glu326 are compositionally biased toward polar residues. The interaction with SNRNP200 stretch occupies residues Lys357–Asp375. Over residues Thr361–Gln376 the composition is skewed to basic and acidic residues.

In terms of assembly, component of the spliceosome B complex. Associated with U2 snRNPs. Binds splicing factors SNRPB, SNRPC and SF1. Interacts via the WW domains with the Pro-rich domains of KHDRBS1/SAM68. Interacts via the WW domains with the Pro-rich domains of WBP11. Interacts with SNRNP200.

It localises to the nucleus. The protein localises to the nucleus speckle. Its function is as follows. Involved in pre-mRNA splicing as a component of the spliceosome. May play a role in cross-intron bridging of U1 and U2 snRNPs in the mammalian A complex. This Homo sapiens (Human) protein is WW domain-binding protein 4 (WBP4).